We begin with the raw amino-acid sequence, 236 residues long: Leucyl/phenylalanyl-tRNA--protein transferase (236 aa).

It belongs to the L/F-transferase family.

Its subcellular location is the cytoplasm. The enzyme catalyses N-terminal L-lysyl-[protein] + L-leucyl-tRNA(Leu) = N-terminal L-leucyl-L-lysyl-[protein] + tRNA(Leu) + H(+). It catalyses the reaction N-terminal L-arginyl-[protein] + L-leucyl-tRNA(Leu) = N-terminal L-leucyl-L-arginyl-[protein] + tRNA(Leu) + H(+). It carries out the reaction L-phenylalanyl-tRNA(Phe) + an N-terminal L-alpha-aminoacyl-[protein] = an N-terminal L-phenylalanyl-L-alpha-aminoacyl-[protein] + tRNA(Phe). In terms of biological role, functions in the N-end rule pathway of protein degradation where it conjugates Leu, Phe and, less efficiently, Met from aminoacyl-tRNAs to the N-termini of proteins containing an N-terminal arginine or lysine. The chain is Leucyl/phenylalanyl-tRNA--protein transferase from Vibrio parahaemolyticus serotype O3:K6 (strain RIMD 2210633).